The primary structure comprises 102 residues: Protein GOLVEN 4 (102 aa).

Residues 1–27 form the signal peptide; the sequence is MEMKKWSYANLITLALLFLFFIILLLA. The propeptide occupies 28-89; the sequence is FQGGSRDDDH…QEREVYVELR (62 aa). The interval 56–78 is disordered; the sequence is KSLKPINPTKKNGFEYPDQGSHD. Tyr-91 carries the sulfotyrosine modification. At Pro-99 the chain carries Hydroxyproline.

This sequence belongs to the RGF family. In terms of assembly, binds to LRR receptor-like serine/threonine-protein kinases to trigger their dimerization with SERK proteins and subsequent signaling. Expressed in roots and sepals.

It is found in the secreted. Its function is as follows. Signaling peptide (root growth factor) that promotes root hairs formation and growth. Maintains the postembryonic root stem cell niche. Regulates the pattern of root growth and lateral root development by modulating the length and the number of cortical cells in the root apical meristem (RAM), and the anticlinal asymmetric cell divisions in lateral root initiation cells. The polypeptide is Protein GOLVEN 4 (Arabidopsis thaliana (Mouse-ear cress)).